The chain runs to 347 residues: Endophilin-A3 (347 aa).

The membrane-binding amphipathic helix stretch occupies residues Met1 to Ile21. Residues Ser18–Lys249 enclose the BAR domain. The tract at residues Pro60–Pro87 is required for dimerization upon membrane association. Positions Glu180 to Met201 form a coiled coil. Residues Phe218 to Glu254 form an interaction with ARC region. A disordered region spans residues Phe255–Pro288. A compositionally biased stretch (polar residues) spans Asn261–Thr281. Residues Ala285–Pro344 enclose the SH3 domain.

It belongs to the endophilin family. In terms of assembly, interacts with ARC, DNM1, SGIP1, SYNJ1 and DYDC1. Interacts with FASLG. Interacts with ATXN2. Interacts with BIN2.

It localises to the cytoplasm. It is found in the early endosome membrane. Functionally, implicated in endocytosis. May recruit other proteins to membranes with high curvature. The polypeptide is Endophilin-A3 (Sh3gl3) (Mus musculus (Mouse)).